We begin with the raw amino-acid sequence, 225 residues long: Proteasome activator 28 (225 aa).

The protein belongs to the PA28 family. As to quaternary structure, homoheptamer. The homoheptamer associates with the 20S proteasome.

The protein resides in the nucleus. Functionally, subunit of the 11S REG (also called PA28) proteasome regulator, a doughnut-shaped homoheptamer which associates with the proteasome. 11S REG-gamma activates preferentially the trypsin-like catalytic subunit of the proteasome. May also be involved in cell cycle regulation. This chain is Proteasome activator 28 (psmE3), found in Dictyostelium discoideum (Social amoeba).